Reading from the N-terminus, the 60-residue chain is 5-hydroxytryptamine receptor 2B (60 aa).

Residues 1–4 (VLCP) lie on the Extracellular side of the membrane. Residues 5–26 (AWLFLDVLFSTASIMHLCAISV) traverse the membrane as a helical segment. Ergotamine-binding residues include D10 and T15. The short motif at 27-29 (DRY) is the DRY motif; important for ligand-induced conformation changes element. The Cytoplasmic segment spans residues 27–46 (DRYIAIKKPIQANQYNSRAT). The chain crosses the membrane as a helical span at residues 47–60 (AFIKITVVWLISIG).

The protein belongs to the G-protein coupled receptor 1 family. Interacts (via C-terminus) with MPDZ. In terms of tissue distribution, detected in aorta, renal artery, jugular vein, vena cava and femoral vein.

The protein resides in the cell membrane. It localises to the synapse. Its subcellular location is the synaptosome. G-protein coupled receptor for 5-hydroxytryptamine (serotonin). Also functions as a receptor for various ergot alkaloid derivatives and psychoactive substances. Ligand binding causes a conformation change that triggers signaling via guanine nucleotide-binding proteins (G proteins) and modulates the activity of downstream effectors. HTR2B is coupled to G(q)/G(11) G alpha proteins and activates phospholipase C-beta, releasing diacylglycerol (DAG) and inositol 1,4,5-trisphosphate (IP3) second messengers that modulate the activity of phosphatidylinositol 3-kinase and promote the release of Ca(2+) ions from intracellular stores, respectively. Beta-arrestin family members inhibit signaling via G proteins and mediate activation of alternative signaling pathways. Plays a role in the regulation of dopamine and 5-hydroxytryptamine release, 5-hydroxytryptamine uptake and in the regulation of extracellular dopamine and 5-hydroxytryptamine levels, and thereby affects neural activity. May play a role in the perception of pain. Plays a role in the regulation of behavior, including impulsive behavior. Required for normal proliferation of embryonic cardiac myocytes and normal heart development. Protects cardiomyocytes against apoptosis. Plays a role in the adaptation of pulmonary arteries to chronic hypoxia. Plays a role in vasoconstriction. Required for normal osteoblast function and proliferation, and for maintaining normal bone density. Required for normal proliferation of the interstitial cells of Cajal in the intestine. The protein is 5-hydroxytryptamine receptor 2B (HTR2B) of Sus scrofa (Pig).